We begin with the raw amino-acid sequence, 292 residues long: Probable 2-(5''-triphosphoribosyl)-3'-dephosphocoenzyme-A synthase (292 aa).

This sequence belongs to the CitG/MdcB family.

It catalyses the reaction 3'-dephospho-CoA + ATP = 2'-(5''-triphospho-alpha-D-ribosyl)-3'-dephospho-CoA + adenine. Its function is as follows. Involved in the formation of 2-(5''-phosphoribosyl)-3'-dephosphocoenzyme-A, the prosthetic group of the acyl-carrier protein of the malonate decarboxylase. This chain is Probable 2-(5''-triphosphoribosyl)-3'-dephosphocoenzyme-A synthase, found in Azotobacter vinelandii (strain DJ / ATCC BAA-1303).